The sequence spans 77 residues: Conodipine-M alpha chain (77 aa).

Position 1 is a pyrrolidone carboxylic acid (Gln1). His36 is an active-site residue.

Heterodimer of an alpha and a beta chains; probably disulfide-linked. Requires Ca(2+) as cofactor. Expressed by the venom duct.

It is found in the secreted. The catalysed reaction is a 1,2-diacyl-sn-glycero-3-phosphocholine + H2O = a 1-acyl-sn-glycero-3-phosphocholine + a fatty acid + H(+). Inhibited by linoleoyl amide and MG14. Functionally, heterodimer: conodipine-M catalyzes the calcium-dependent hydrolysis of the 2-acyl groups in 3-sn-phosphoglycerides. This activity may be supported by the alpha chain. Conodipine-M inhibits the binding of isradipine (a ligand specific for L-type calcium channel) to L-type calcium channels. The chain is Conodipine-M alpha chain from Conus magus (Magical cone).